The primary structure comprises 261 residues: CD40 ligand (261 aa).

Residues 1-22 lie on the Cytoplasmic side of the membrane; that stretch reads MIETYSQPSPRSVAAGPPVSMK. The chain crosses the membrane as a helical; Signal-anchor for type II membrane protein span at residues 23–43; that stretch reads IFMYLLTVFLITQMIGSALFA. The Extracellular portion of the chain corresponds to 44 to 240; that stretch reads AYLHRRLDKI…LQPGASVFVN (197 aa). Residues 122–261 enclose the THD domain; sequence IAAHVISEAS…GFTSFGLLKL (140 aa). An intrachain disulfide couples C178 to C218. An N-linked (GlcNAc...) asparagine glycan is attached at N240.

Belongs to the tumor necrosis factor family. Homotrimer. Interacts with CD28. CD40 ligand, soluble form: Exists as either a monomer or a homotrimer. Forms a ternary complex between CD40 and integrins for CD40-CD40LG signaling. In terms of processing, the soluble form derives from the membrane form by proteolytic processing.

The protein localises to the cell membrane. It localises to the cell surface. It is found in the secreted. Its function is as follows. Cytokine that acts as a ligand to CD40/TNFRSF5. Costimulates T-cell proliferation and cytokine production. Its cross-linking on T-cells generates a costimulatory signal which enhances the production of IL4 and IL10 in conjunction with the TCR/CD3 ligation and CD28 costimulation. Induces the activation of NF-kappa-B. Induces the activation of kinases MAPK8 and PAK2 in T-cells. Mediates B-cell proliferation in the absence of co-stimulus as well as IgE production in the presence of IL4. Involved in immunoglobulin class switching. Functionally, acts as a ligand for integrins, specifically ITGA5:ITGB1 and ITGAV:ITGB3; both integrins and the CD40 receptor are required for activation of CD40-CD40LG signaling, which have cell-type dependent effects, such as B-cell activation, NF-kappa-B signaling and anti-apoptotic signaling. The sequence is that of CD40 ligand (CD40LG) from Sus scrofa (Pig).